The following is a 170-amino-acid chain: Bifunctional protein PyrR (170 aa).

Positions 90 to 102 (LVLIDDVLMSGRT) match the PRPP-binding motif.

Belongs to the purine/pyrimidine phosphoribosyltransferase family. PyrR subfamily.

The catalysed reaction is UMP + diphosphate = 5-phospho-alpha-D-ribose 1-diphosphate + uracil. Its function is as follows. Regulates the transcription of the pyrimidine nucleotide (pyr) operon in response to exogenous pyrimidines. Functionally, also displays a weak uracil phosphoribosyltransferase activity which is not physiologically significant. The protein is Bifunctional protein PyrR of Pseudomonas savastanoi pv. phaseolicola (strain 1448A / Race 6) (Pseudomonas syringae pv. phaseolicola (strain 1448A / Race 6)).